Reading from the N-terminus, the 241-residue chain is MRIDILTLFPEMFAPLEHSIVGKARDKGLLEINYHNFRENAEKARHVDDEPYGGGQGMLLLAQPIFDTMDSIEQTKPRVILLDPAGRTFNQAYAEELAQEEQLIFICGHYEGYDERIKTLVTDEISLGDYVLTGGELAAMTMIDATVRLIPEVIGKEVSHTDDSFSSGLLEYPQYTRPYEYRGMVVPDVLMSGHHENIRKWRLEESLRKTYQRRPDLLENYNFTAEELTIFEKIKAEDTVD.

S-adenosyl-L-methionine-binding positions include G108 and 127–132; that span reads LGDYVL.

Belongs to the RNA methyltransferase TrmD family. In terms of assembly, homodimer.

The protein localises to the cytoplasm. The enzyme catalyses guanosine(37) in tRNA + S-adenosyl-L-methionine = N(1)-methylguanosine(37) in tRNA + S-adenosyl-L-homocysteine + H(+). Specifically methylates guanosine-37 in various tRNAs. In Streptococcus suis (strain 98HAH33), this protein is tRNA (guanine-N(1)-)-methyltransferase.